The sequence spans 483 residues: Regulatory protein ViaA (483 aa).

The protein belongs to the ViaA family. In terms of assembly, homodimer. Interacts with RavA.

The protein resides in the cytoplasm. Component of the RavA-ViaA chaperone complex, which may act on the membrane to optimize the function of some of the respiratory chains. ViaA stimulates the ATPase activity of RavA. The chain is Regulatory protein ViaA from Escherichia coli O1:K1 / APEC.